Reading from the N-terminus, the 174-residue chain is Adenylate kinase (174 aa).

An NMP region spans residues 12-41 (STGDMLRAAIKAGTPLGLEAKKIIDEGGLV). AMP-binding positions include T13, R18, 39–41 (GLV), 67–70 (GFPR), and Q74. The segment at 104-141 (GRRVHLASGRTYHVTYNPPKVEGKDDVTGEDLIQRDDD) is LID. ATP contacts are provided by residues R105 and 114–115 (TY). R138 and R149 together coordinate AMP.

This sequence belongs to the adenylate kinase family. In terms of assembly, monomer.

It localises to the cytoplasm. It carries out the reaction AMP + ATP = 2 ADP. The protein operates within purine metabolism; AMP biosynthesis via salvage pathway; AMP from ADP: step 1/1. Catalyzes the reversible transfer of the terminal phosphate group between ATP and AMP. Plays an important role in cellular energy homeostasis and in adenine nucleotide metabolism. This chain is Adenylate kinase, found in Neisseria flavescens.